The primary structure comprises 434 residues: Trigger factor (434 aa).

The 86-residue stretch at Glu-161 to Pro-246 folds into the PPIase FKBP-type domain.

Belongs to the FKBP-type PPIase family. Tig subfamily.

It localises to the cytoplasm. It carries out the reaction [protein]-peptidylproline (omega=180) = [protein]-peptidylproline (omega=0). Functionally, involved in protein export. Acts as a chaperone by maintaining the newly synthesized protein in an open conformation. Functions as a peptidyl-prolyl cis-trans isomerase. The protein is Trigger factor of Erwinia tasmaniensis (strain DSM 17950 / CFBP 7177 / CIP 109463 / NCPPB 4357 / Et1/99).